Reading from the N-terminus, the 95-residue chain is Aspartyl/glutamyl-tRNA(Asn/Gln) amidotransferase subunit C (95 aa).

The protein belongs to the GatC family. As to quaternary structure, heterotrimer of A, B and C subunits.

The catalysed reaction is L-glutamyl-tRNA(Gln) + L-glutamine + ATP + H2O = L-glutaminyl-tRNA(Gln) + L-glutamate + ADP + phosphate + H(+). It catalyses the reaction L-aspartyl-tRNA(Asn) + L-glutamine + ATP + H2O = L-asparaginyl-tRNA(Asn) + L-glutamate + ADP + phosphate + 2 H(+). Functionally, allows the formation of correctly charged Asn-tRNA(Asn) or Gln-tRNA(Gln) through the transamidation of misacylated Asp-tRNA(Asn) or Glu-tRNA(Gln) in organisms which lack either or both of asparaginyl-tRNA or glutaminyl-tRNA synthetases. The reaction takes place in the presence of glutamine and ATP through an activated phospho-Asp-tRNA(Asn) or phospho-Glu-tRNA(Gln). The sequence is that of Aspartyl/glutamyl-tRNA(Asn/Gln) amidotransferase subunit C from Nitrosococcus oceani (strain ATCC 19707 / BCRC 17464 / JCM 30415 / NCIMB 11848 / C-107).